Consider the following 736-residue polypeptide: MSSGPIRTLHKGKAARNRTPYDRIAASKDGNHSNGPQTPSKSIFQRAKEWLTPSSWKKAISIFSSPVVNKHEDSFDSKTDEEYLQNVSTTTEDVSMLINTPVTEKYEQEHRDTSAQATPSIVEQSPNQMLANFFSKKGKTPLNEIEKEGIISILNKSASPSSSVISPAASLNRFQTPRAAAISKRESGVSSEPRARTSSLTPGNTPNSAKQWSAFRSTFSPLREQDQLSTISPNSLLPAQRLSYYGPTLSTPYNRRLRHKRHSTTPISLSNSIAPSLSFQPKKARYESANVSFNDTSFTNVPTSSPLHQSTTANHPEKTPSRAAASLLSILDSKEKNTPSITAKAGSPQSAPSKASYISPYARPGITTSRRRHDQIRPSSEKSEPEKKEPSAFETLEKSSNVQTYKPSLMPEFLEKASTHGSFAKQKEGEQTSLSEKTALSEPENKTPVFSFKAPSATTDKPSPPVSSIFSFNAPSAASTKPSPAVSSTFSFNAPTTTPSATSFSIINKEKPARSPNETIDVDLEEEGSGISAEVEVANEGEDLQKNATEVKASTSEKPVFRFEAVTDEKNSEVSSSNQASSSTMISQPNTGFSFGSFNKPAGQEEKPQQRSLFSASFTTQKPELPAAKIEPEVQMTNVAIDQRSFEQAEKSPISVSESTSLVEVEKPSAEGTNEHKQDATMTLEKTDKQGSLEEEPFPKFSFTVLPKENGENLSTMESTQELPKFSFSVLKEEKN.

The tract at residues 1 to 46 (MSSGPIRTLHKGKAARNRTPYDRIAASKDGNHSNGPQTPSKSIFQR) is disordered. A compositionally biased stretch (basic and acidic residues) spans 19–31 (TPYDRIAASKDGN). Residues 32–43 (HSNGPQTPSKSI) show a composition bias toward polar residues. Residues Ser157, Ser159, Ser161, and Ser162 each carry the phosphoserine modification. Disordered stretches follow at residues 178–210 (RAAA…NSAK), 295–321 (DTSF…KTPS), 338–519 (TPSI…PNET), 565–614 (AVTD…RSLF), and 647–701 (EQAE…FPKF). Composition is skewed to polar residues over residues 196–210 (RTSS…NSAK) and 295–314 (DTSF…TTAN). Residues 375 to 397 (QIRPSSEKSEPEKKEPSAFETLE) show a composition bias toward basic and acidic residues. The span at 456–473 (SATTDKPSPPVSSIFSFN) shows a compositional bias: polar residues. 2 stretches are compositionally biased toward low complexity: residues 474 to 505 (APSA…TSFS) and 573 to 587 (EVSS…TMIS). The segment covering 588 to 597 (QPNTGFSFGS) has biased composition (polar residues). A compositionally biased stretch (basic and acidic residues) spans 664–692 (EVEKPSAEGTNEHKQDATMTLEKTDKQGS).

As to quaternary structure, component of the nuclear pore complex (NPC). NPC constitutes the exclusive means of nucleocytoplasmic transport. NPCs allow the passive diffusion of ions and small molecules and the active, nuclear transport receptor-mediated bidirectional transport of macromolecules such as proteins, RNAs, ribonucleoparticles (RNPs), and ribosomal subunits across the nuclear envelope.

The protein resides in the nucleus. It localises to the nuclear pore complex. The protein localises to the nucleus membrane. In terms of biological role, functions as a component of the nuclear pore complex (NPC). NPC components, collectively referred to as nucleoporins (NUPs), can play the role of both NPC structural components and of docking or interaction partners for transiently associated nuclear transport factors. Active directional transport is assured by both, a Phe-Gly (FG) repeat affinity gradient for these transport factors across the NPC and a transport cofactor concentration gradient across the nuclear envelope. This chain is Nucleoporin nup60 (nup60), found in Schizosaccharomyces pombe (strain 972 / ATCC 24843) (Fission yeast).